Reading from the N-terminus, the 425-residue chain is Testicular acid phosphatase (425 aa).

An N-terminal signal peptide occupies residues 1–27; the sequence is MAEPGSQGHTVGPLLLLLLLLLPRALP. At 28 to 392 the chain is on the extracellular side; the sequence is EGPLLFVALV…EPASPPATVP (365 aa). H40 (nucleophile) is an active-site residue. Intrachain disulfides connect C158–C378, C213–C311, and C353–C357. The active-site Proton donor is the D288. Residues 393–413 traverse the membrane as a helical segment; the sequence is LLAGAVAVLAVLSLGLGLLAW. Residues 414 to 425 are Cytoplasmic-facing; the sequence is RPRCLRALGGTV.

The protein belongs to the histidine acid phosphatase family. In terms of assembly, homodimer. Glycosylated.

Its subcellular location is the membrane. It catalyses the reaction a phosphate monoester + H2O = an alcohol + phosphate. Functionally, may dephosphorylate receptor tyrosine-protein kinase ERBB4 and inhibits its ligand-induced proteolytic cleavage. May play a role in odontogenesis. This Mus musculus (Mouse) protein is Testicular acid phosphatase.